A 204-amino-acid chain; its full sequence is Ancillary SecYEG translocon subunit (204 aa).

The Cytoplasmic portion of the chain corresponds to 1 to 23 (MAYTIEEEQELTAIKAWWNENYK). Residues 24–44 (FIIVCFVIAFGGVFGWNYWQS) traverse the membrane as a helical segment. The Periplasmic portion of the chain corresponds to 45 to 204 (HQIQKMHKAS…QLIQVRLNNL (160 aa)).

It belongs to the YfgM family. As to quaternary structure, interacts with the SecYEG translocon. Forms a complex with PpiD.

Its subcellular location is the cell inner membrane. Its function is as follows. May mediate protein transfer from the SecYEG translocon to the periplasmic chaperone network via its periplasmic C-terminal region. This Aggregatibacter actinomycetemcomitans (Actinobacillus actinomycetemcomitans) protein is Ancillary SecYEG translocon subunit (1057).